Reading from the N-terminus, the 310-residue chain is Methionyl-tRNA formyltransferase (310 aa).

Position 109 to 112 (109 to 112) interacts with (6S)-5,6,7,8-tetrahydrofolate; the sequence is SLLP.

The protein belongs to the Fmt family.

It catalyses the reaction L-methionyl-tRNA(fMet) + (6R)-10-formyltetrahydrofolate = N-formyl-L-methionyl-tRNA(fMet) + (6S)-5,6,7,8-tetrahydrofolate + H(+). Functionally, attaches a formyl group to the free amino group of methionyl-tRNA(fMet). The formyl group appears to play a dual role in the initiator identity of N-formylmethionyl-tRNA by promoting its recognition by IF2 and preventing the misappropriation of this tRNA by the elongation apparatus. This chain is Methionyl-tRNA formyltransferase, found in Pseudomonas putida (strain ATCC 700007 / DSM 6899 / JCM 31910 / BCRC 17059 / LMG 24140 / F1).